A 492-amino-acid polypeptide reads, in one-letter code: Catalase isozyme 1 (492 aa).

Catalysis depends on residues His-65 and Asn-138. Position 348 (Tyr-348) interacts with heme.

The protein belongs to the catalase family. Homotetramer. Heme serves as cofactor. As to expression, in whole endosperms (aleurones plus starchy endosperm), in isolated aleurones and in developing seeds.

The protein localises to the peroxisome. Its subcellular location is the glyoxysome. It carries out the reaction 2 H2O2 = O2 + 2 H2O. Functionally, occurs in almost all aerobically respiring organisms and serves to protect cells from the toxic effects of hydrogen peroxide. The chain is Catalase isozyme 1 (CAT1) from Hordeum vulgare (Barley).